A 530-amino-acid chain; its full sequence is T-complex protein 1 subunit zeta-2 (530 aa).

Belongs to the TCP-1 chaperonin family. In terms of assembly, component of the chaperonin-containing T-complex (TRiC), a heterooligomeric complex of about 850 to 900 kDa that forms two stacked rings, 12 to 16 nm in diameter. In terms of tissue distribution, testis-specific.

It localises to the cytoplasm. In terms of biological role, component of the chaperonin-containing T-complex (TRiC), a molecular chaperone complex that assists the folding of proteins upon ATP hydrolysis. The protein is T-complex protein 1 subunit zeta-2 (CCT6B) of Homo sapiens (Human).